The following is a 75-amino-acid chain: Small capsomere-interacting protein (75 aa).

The protein belongs to the herpesviridae small capsomere-interacting protein family. As to quaternary structure, interacts with the major capsid protein/MCP.

The protein resides in the virion. It localises to the host nucleus. Its function is as follows. Participates in the assembly of the infectious particles by decorating the outer surface of the capsid shell and thus forming a layer between the capsid and the tegument. Complexes composed of the capsid protein VP5 and UL48A assemble together in the host cytoplasm and are translocated to the nucleus, where they accumulate and participate in capsid assembly. In terms of biological role, participates in the assembly of the infectious particles by decorating the outer surface of the capsid shell and thus forming a layer between the capsid and the tegument. Complexes composed of the major capsid protein and small capsomere-interacting protein/SCP assemble together in the host cytoplasm and are translocated to the nucleus, where they accumulate and participate in capsid assembly. This Homo sapiens (Human) protein is Small capsomere-interacting protein.